A 253-amino-acid chain; its full sequence is CD151 antigen (253 aa).

The Cytoplasmic portion of the chain corresponds to 1-18 (MGEFNEKKATCGTVCLKY). S-palmitoyl cysteine attachment occurs at residues Cys11 and Cys15. The chain crosses the membrane as a helical span at residues 19-39 (LLFTYNCCFWLAGLAVMAVGI). Residues 40 to 57 (WTLALKSDYISLLASSTY) lie on the Extracellular side of the membrane. A helical transmembrane segment spans residues 58 to 78 (LATAYILVVAGVVVMVTGVLG). At 79–91 (CCATFKERRNLLR) the chain is on the cytoplasmic side. Residues 92–112 (LYFILLLIIFLLEIIAGILAY) traverse the membrane as a helical segment. The Extracellular portion of the chain corresponds to 113-221 (VYYQQLNTEL…LESFIQEHLR (109 aa)). The N-linked (GlcNAc...) asparagine glycan is linked to Asn159. A helical membrane pass occupies residues 222–242 (VIGAVGIGIACVQVFGMIFTC). 2 S-palmitoyl cysteine lipidation sites follow: Cys242 and Cys243. Residues 243–253 (CLYRSLKLEHY) lie on the Cytoplasmic side of the membrane.

It belongs to the tetraspanin (TM4SF) family. As to quaternary structure, interacts with integrins ITGA3:ITGB1, ITGA5:ITGB1, ITGA3:ITGB1 and ITGA6:ITGB4 and with CD9 and CD181. Interacts (via the second extracellular domain) with integrin ITGAV:ITGB3. Interacts with ITGA3; this interaction modulates ITGA3 glycosylation pattern. Interacts with F11R. Interacts with RAC1 and CDC42; these interactions mediate physical association of RAC1 and CDC42 with integrin adhesion receptor complexes. Palmitoylated. Palmitoylation by ZDHHC2 regulates CD151 expression, association with other tetraspanin family proteins and function in cell adhesion. Post-translationally, ubiquitinated by RNF128 on lysine residues present in the tetraspanin amino terminus via 'Lys-48'-linked ubiquitin leading to proteasomal degradation.

It is found in the cell membrane. Functionally, structural component of specialized membrane microdomains known as tetraspanin-enriched microdomains (TERMs), which act as platforms for receptor clustering and signaling. Plays a role in various cellular and molecular mechanism through its association with both integrin and non-integrin proteins. These interactions facilitate critical cellular functions, including cell-to-cell communication, wound healing, platelet aggregation, trafficking, cell motility, and angiogenesis. Via interaction with JAM-A/F11R and integrin ITGA3:ITGB1, promotes the recruitment of signaling molecules such as RAC1, CDC42 and RhoGTPases to facilitate the polarization of epithelial cells and the reorganization of the actin cytoskeleton, which are critical steps in cell migration process. Regulates the glycosylation pattern of ITGA3:ITGB1 thereby modulating its activity. Plays an essential role in the maintenance of central laminin-binding integrin ITGA6:ITGB4-containing adhesion complexes. Essential for the proper assembly of the glomerular and tubular basement membranes in kidney. Contributes to T-cell activation by modulating integrin signaling leading to activation of downstream targets PTK2 and MAPK1/MAPK3. The protein is CD151 antigen (Cd151) of Rattus norvegicus (Rat).